The following is a 911-amino-acid chain: Desmoglein-1-gamma (911 aa).

An N-terminal signal peptide occupies residues 1 to 23 (MDWHSFRIAALLLTSLVVLEVNS). A propeptide spanning residues 24-49 (EFQIQVRDHNAKNGTIKWHSIRRQKR) is cleaved from the precursor. Cadherin domains are found at residues 50–157 (EWIK…PPVF), 158–269 (SMTT…IPYL), and 270–389 (EQSS…QPGS). The Extracellular portion of the chain corresponds to 50 to 519 (EWIKFAAACR…PNVDNVHFGP (470 aa)). N-linked (GlcNAc...) (high mannose) asparagine glycosylation occurs at asparagine 110. The N-linked (GlcNAc...) asparagine glycan is linked to asparagine 180. Asparagine 401 is a glycosylation site (N-linked (GlcNAc...) asparagine). A helical transmembrane segment spans residues 520 to 540 (AGIGLLIMGFLVLGLVPFLLI). Topologically, residues 541-911 (SCDCGGAPGG…GMIGNLSIPP (371 aa)) are cytoplasmic. Desmoglein repeat repeat units follow at residues 783 to 809 (AYPS…TVRE), 810 to 839 (SYTT…ERVV), 840 to 869 (GPIS…ERVI), and 870 to 897 (APGS…ERVI). Residues 898–911 (QPTSGMIGNLSIPP) form a Desmoglein repeat 5; truncated repeat.

Interacts with DSC3; there is evidence to suggest that the interaction promotes cell-cell adhesion of keratinocytes. In terms of tissue distribution, expressed in epidermis, brain, liver, skeletal, muscle and testis.

The protein resides in the cell membrane. It localises to the cell junction. It is found in the desmosome. The protein localises to the cytoplasm. Its subcellular location is the nucleus. In terms of biological role, component of intercellular desmosome junctions. Involved in the interaction of plaque proteins and intermediate filaments mediating cell-cell adhesion. The sequence is that of Desmoglein-1-gamma (Dsg1c) from Mus musculus (Mouse).